The sequence spans 694 residues: Elongation factor G (694 aa).

The region spanning 8–284 (EKLRNIGIVA…AVIDFLPSPV (277 aa)) is the tr-type G domain. GTP contacts are provided by residues 17–24 (AHIDAGKT), 81–85 (DTPGH), and 135–138 (NKMD).

It belongs to the TRAFAC class translation factor GTPase superfamily. Classic translation factor GTPase family. EF-G/EF-2 subfamily.

Its subcellular location is the cytoplasm. Catalyzes the GTP-dependent ribosomal translocation step during translation elongation. During this step, the ribosome changes from the pre-translocational (PRE) to the post-translocational (POST) state as the newly formed A-site-bound peptidyl-tRNA and P-site-bound deacylated tRNA move to the P and E sites, respectively. Catalyzes the coordinated movement of the two tRNA molecules, the mRNA and conformational changes in the ribosome. This is Elongation factor G from Persephonella marina (strain DSM 14350 / EX-H1).